The primary structure comprises 42 residues: Photosystem II reaction center protein J (42 aa).

A helical membrane pass occupies residues Ile-10–Phe-30.

The protein belongs to the PsbJ family. PSII is composed of 1 copy each of membrane proteins PsbA, PsbB, PsbC, PsbD, PsbE, PsbF, PsbH, PsbI, PsbJ, PsbK, PsbL, PsbM, PsbT, PsbX, PsbY, PsbZ, Psb30/Ycf12, at least 3 peripheral proteins of the oxygen-evolving complex and a large number of cofactors. It forms dimeric complexes.

It localises to the plastid. It is found in the chloroplast thylakoid membrane. One of the components of the core complex of photosystem II (PSII). PSII is a light-driven water:plastoquinone oxidoreductase that uses light energy to abstract electrons from H(2)O, generating O(2) and a proton gradient subsequently used for ATP formation. It consists of a core antenna complex that captures photons, and an electron transfer chain that converts photonic excitation into a charge separation. In Chara vulgaris (Common stonewort), this protein is Photosystem II reaction center protein J.